The following is a 245-amino-acid chain: Transmembrane protein 69 (245 aa).

5 helical membrane-spanning segments follow: residues 97–117 (ALYI…LMVI), 122–142 (IPVL…FLGG), 159–179 (YINL…ILFS), 185–205 (AIVT…FLLP), and 216–236 (IVST…ENIY).

The protein localises to the membrane. This chain is Transmembrane protein 69 (Tmem69), found in Mus musculus (Mouse).